Here is an 883-residue protein sequence, read N- to C-terminus: Puromycin-sensitive aminopeptidase (883 aa).

Substrate is bound by residues Glu125 and 265–269; that span reads GAMEN. Position 301 (His301) interacts with Zn(2+). Glu302 functions as the Proton acceptor in the catalytic mechanism. Residues His305 and Glu324 each contribute to the Zn(2+) site.

Belongs to the peptidase M1 family. It depends on Zn(2+) as a cofactor.

The enzyme catalyses Release of an N-terminal amino acid, preferentially alanine, from a wide range of peptides, amides and arylamides.. Strongly inhibited by puromycin and DAMPAQ-22. Aminopeptidase with broad substrate specificity for several peptides. Involved in proteolytic events essential for cell growth and viability. Plays an essential role during prophase I of meiosis. Required for correct meiotic reconbination in both male and female gametophytes. The polypeptide is Puromycin-sensitive aminopeptidase (MPA1) (Arabidopsis thaliana (Mouse-ear cress)).